The chain runs to 246 residues: Probable septum site-determining protein MinC (246 aa).

This sequence belongs to the MinC family. In terms of assembly, interacts with MinD and FtsZ.

Functionally, cell division inhibitor that blocks the formation of polar Z ring septums. Rapidly oscillates between the poles of the cell to destabilize FtsZ filaments that have formed before they mature into polar Z rings. Prevents FtsZ polymerization. This chain is Probable septum site-determining protein MinC, found in Pseudomonas syringae pv. tomato (strain ATCC BAA-871 / DC3000).